A 94-amino-acid polypeptide reads, in one-letter code: Small ribosomal subunit protein uS19 (94 aa).

This sequence belongs to the universal ribosomal protein uS19 family.

In terms of biological role, protein S19 forms a complex with S13 that binds strongly to the 16S ribosomal RNA. The chain is Small ribosomal subunit protein uS19 from Syntrophomonas wolfei subsp. wolfei (strain DSM 2245B / Goettingen).